Reading from the N-terminus, the 143-residue chain is uncharacterized protein (143 aa).

A signal peptide spans 1–27 (MSDEIARLVADVFELAGLLRRSGEVVA).

This is an uncharacterized protein from Mycobacterium tuberculosis (strain CDC 1551 / Oshkosh).